A 300-amino-acid chain; its full sequence is Homoserine kinase (300 aa).

An ATP-binding site is contributed by 86–96; that stretch reads PVARGLGSSAT.

Belongs to the GHMP kinase family. Homoserine kinase subfamily.

The protein localises to the cytoplasm. It carries out the reaction L-homoserine + ATP = O-phospho-L-homoserine + ADP + H(+). Its pathway is amino-acid biosynthesis; L-threonine biosynthesis; L-threonine from L-aspartate: step 4/5. In terms of biological role, catalyzes the ATP-dependent phosphorylation of L-homoserine to L-homoserine phosphate. This Persephonella marina (strain DSM 14350 / EX-H1) protein is Homoserine kinase.